The sequence spans 105 residues: Nucleoid-associated protein ABO_1774 (105 aa).

The disordered stretch occupies residues 85–105 (QQQDSMQNMAGGFPFPPGFKP).

It belongs to the YbaB/EbfC family. In terms of assembly, homodimer.

It is found in the cytoplasm. It localises to the nucleoid. Functionally, binds to DNA and alters its conformation. May be involved in regulation of gene expression, nucleoid organization and DNA protection. In Alcanivorax borkumensis (strain ATCC 700651 / DSM 11573 / NCIMB 13689 / SK2), this protein is Nucleoid-associated protein ABO_1774.